The primary structure comprises 73 residues: Antitoxin VapB20 (73 aa).

Antitoxin component of a type II toxin-antitoxin (TA) system. Upon expression in E.coli neutralizes the toxic effect of cognate toxin VapC20. The protein is Antitoxin VapB20 (vapB20) of Mycobacterium tuberculosis (strain ATCC 25618 / H37Rv).